Here is a 1083-residue protein sequence, read N- to C-terminus: Ubiquitin-protein ligase E3C (1083 aa).

Basic and acidic residues-rich tracts occupy residues 1–10 and 20–40; these read MFSFEGDFKT and SRKEEKASLLHRTQEERRKRE. The disordered stretch occupies residues 1 to 40; it reads MFSFEGDFKTRPKVSLGGASRKEEKASLLHRTQEERRKRE. Residues 1 to 60 form a cis-determinant of acceptor ubiquitin-binding region; the sequence is MFSFEGDFKTRPKVSLGGASRKEEKASLLHRTQEERRKREEERRRLKNAIIIQSFIRGYR. Residues 45–74 form the IQ domain; that stretch reads RLKNAIIIQSFIRGYRDRKQQYSIQRSAFD. The disordered stretch occupies residues 355–385; it reads SPASASCHDSASDSEEESEEADKPSSPEDGR. The span at 375–385 shows a compositional bias: basic and acidic residues; sequence ADKPSSPEDGR. The HECT domain occupies 744–1083; sequence NEPDLKKRIR…IECAAGFELS (340 aa). Lys903 is covalently cross-linked (Glycyl lysine isopeptide (Lys-Gly) (interchain with G-Cter in ubiquitin); by autocatalysis). Residue Cys1051 is the Glycyl thioester intermediate of the active site.

It belongs to the UBE3C family. In terms of assembly, interacts with 26S proteasomes. Interacts (via the HECT domain) with UBE2D1 and, less efficiently, with UBE2L3. Autoubiquitinated; promoting its own degradation. Highly expressed in skeletal muscle. Detected at much lower levels in kidney and pancreas.

The catalysed reaction is S-ubiquitinyl-[E2 ubiquitin-conjugating enzyme]-L-cysteine + [acceptor protein]-L-lysine = [E2 ubiquitin-conjugating enzyme]-L-cysteine + N(6)-ubiquitinyl-[acceptor protein]-L-lysine.. The protein operates within protein modification; protein ubiquitination. Its function is as follows. E3 ubiquitin-protein ligase that specifically catalyzes 'Lys-29'- and 'Lys-48'-linked polyubiquitin chains. Accepts ubiquitin from the E2 ubiquitin-conjugating enzyme UBE2D1 in the form of a thioester and then directly transfers the ubiquitin to targeted substrates. Associates with the proteasome and promotes elongation of ubiquitin chains on substrates bound to the 26S proteasome. Also catalyzes 'Lys-29'- and 'Lys-48'-linked ubiquitination of 26S proteasome subunit ADRM1/RPN13 in response to proteotoxic stress, impairing the ability of the proteasome to bind and degrade ubiquitin-conjugated proteins. Acts as a negative regulator of autophagy by mediating 'Lys-29'- and 'Lys-48'-linked ubiquitination of PIK3C3/VPS34, promoting its degradation. Can assemble unanchored poly-ubiquitin chains in either 'Lys-29'- or 'Lys-48'-linked polyubiquitin chains; with some preference for 'Lys-48' linkages. Acts as a negative regulator of type I interferon by mediating 'Lys-48'-linked ubiquitination of IRF3 and IRF7, leading to their degradation by the proteasome. Catalyzes ubiquitination and degradation of CAND2. The protein is Ubiquitin-protein ligase E3C of Homo sapiens (Human).